A 237-amino-acid chain; its full sequence is Uracil-DNA glycosylase (237 aa).

The active-site Proton acceptor is the Asp77.

It belongs to the uracil-DNA glycosylase (UDG) superfamily. UNG family.

It localises to the cytoplasm. It catalyses the reaction Hydrolyzes single-stranded DNA or mismatched double-stranded DNA and polynucleotides, releasing free uracil.. Functionally, excises uracil residues from the DNA which can arise as a result of misincorporation of dUMP residues by DNA polymerase or due to deamination of cytosine. This Acinetobacter baylyi (strain ATCC 33305 / BD413 / ADP1) protein is Uracil-DNA glycosylase.